A 563-amino-acid chain; its full sequence is Arginine--tRNA ligase (563 aa).

A 'HIGH' region motif is present at residues 122–132 (PNIAKPMSMGH).

The protein belongs to the class-I aminoacyl-tRNA synthetase family. Monomer.

It localises to the cytoplasm. The enzyme catalyses tRNA(Arg) + L-arginine + ATP = L-arginyl-tRNA(Arg) + AMP + diphosphate. This Levilactobacillus brevis (strain ATCC 367 / BCRC 12310 / CIP 105137 / JCM 1170 / LMG 11437 / NCIMB 947 / NCTC 947) (Lactobacillus brevis) protein is Arginine--tRNA ligase.